The following is a 265-amino-acid chain: uncharacterized protein (265 aa).

The tract at residues 122–145 (THYRDNGQTPPRDTRPHGGISLGG) is disordered.

This is an uncharacterized protein from Zymomonas mobilis subsp. mobilis (strain ATCC 31821 / ZM4 / CP4).